We begin with the raw amino-acid sequence, 24 residues long: Protein YsdE (24 aa).

In Escherichia coli (strain K12), this protein is Protein YsdE.